A 203-amino-acid polypeptide reads, in one-letter code: ATP-dependent Clp protease proteolytic subunit 2 (203 aa).

The active-site Nucleophile is the S98. H123 is an active-site residue.

This sequence belongs to the peptidase S14 family. As to quaternary structure, fourteen ClpP subunits assemble into 2 heptameric rings which stack back to back to give a disk-like structure with a central cavity, resembling the structure of eukaryotic proteasomes.

The protein resides in the cytoplasm. The catalysed reaction is Hydrolysis of proteins to small peptides in the presence of ATP and magnesium. alpha-casein is the usual test substrate. In the absence of ATP, only oligopeptides shorter than five residues are hydrolyzed (such as succinyl-Leu-Tyr-|-NHMec, and Leu-Tyr-Leu-|-Tyr-Trp, in which cleavage of the -Tyr-|-Leu- and -Tyr-|-Trp bonds also occurs).. Functionally, cleaves peptides in various proteins in a process that requires ATP hydrolysis. Has a chymotrypsin-like activity. Plays a major role in the degradation of misfolded proteins. This Chlamydia trachomatis serovar A (strain ATCC VR-571B / DSM 19440 / HAR-13) protein is ATP-dependent Clp protease proteolytic subunit 2.